The sequence spans 342 residues: Dihydroorotate dehydrogenase (quinone) (342 aa).

Residues 61-65 (AGLDK) and Thr85 contribute to the FMN site. Residue Lys65 coordinates substrate. Position 110 to 114 (110 to 114 (NRMGF)) interacts with substrate. Asn138 and Asn171 together coordinate FMN. Asn171 is a substrate binding site. The active-site Nucleophile is the Ser174. A substrate-binding site is contributed by Asn176. Lys216 and Thr244 together coordinate FMN. A substrate-binding site is contributed by 245-246 (NT). Residues Gly267, Gly296, and 317–318 (YS) each bind FMN.

This sequence belongs to the dihydroorotate dehydrogenase family. Type 2 subfamily. In terms of assembly, monomer. FMN serves as cofactor.

It is found in the cell membrane. The catalysed reaction is (S)-dihydroorotate + a quinone = orotate + a quinol. Its pathway is pyrimidine metabolism; UMP biosynthesis via de novo pathway; orotate from (S)-dihydroorotate (quinone route): step 1/1. In terms of biological role, catalyzes the conversion of dihydroorotate to orotate with quinone as electron acceptor. The chain is Dihydroorotate dehydrogenase (quinone) from Cellvibrio japonicus (strain Ueda107) (Pseudomonas fluorescens subsp. cellulosa).